Here is a 513-residue protein sequence, read N- to C-terminus: Histidine ammonia-lyase (513 aa).

The segment at residues 144–146 is a cross-link (5-imidazolinone (Ala-Gly)); sequence ASG. At Ser-145 the chain carries 2,3-didehydroalanine (Ser).

It belongs to the PAL/histidase family. Contains an active site 4-methylidene-imidazol-5-one (MIO), which is formed autocatalytically by cyclization and dehydration of residues Ala-Ser-Gly.

The protein localises to the cytoplasm. It catalyses the reaction L-histidine = trans-urocanate + NH4(+). The protein operates within amino-acid degradation; L-histidine degradation into L-glutamate; N-formimidoyl-L-glutamate from L-histidine: step 1/3. The chain is Histidine ammonia-lyase from Streptococcus gordonii (strain Challis / ATCC 35105 / BCRC 15272 / CH1 / DL1 / V288).